Consider the following 55-residue polypeptide: Potassium channel toxin alpha-KTX 12 Sp2 (55 aa).

The signal sequence occupies residues 1–18; the sequence is MRLAIILLLMTTIVLTIG. 3 disulfide bridges follow: Cys-26–Cys-46, Cys-32–Cys-51, and Cys-36–Cys-53.

This sequence belongs to the short scorpion toxin superfamily. Potassium channel inhibitor family. Alpha-KTx 12 subfamily. Expressed by the venom gland.

Its subcellular location is the secreted. Its function is as follows. Blocks mouse voltage-gated potassium channels Kv1.3/KCNA3 (IC(50)=0.3-30 nM), when the channel is expressed in Jurkat T cells or in HEK293 cells. Also shows a weaker inhibition on mKv1.2/KCNA2 (IC(50)=56.9 nM) and mKv1.1/KCNA1 (IC(50)=485 nM). Probably through the inhibition of both Kv1.2/KCNA2 and Kv1.3/KCNA3, the toxin also reduces the free calcium concentration in Jurkat T cells, inhibits the activation of Jurkat T cells and reduces the release of inflammatory cytokines interleukin-2, showing a strong immunosuppressant effect. The protein is Potassium channel toxin alpha-KTX 12 Sp2 of Scorpiops pococki (Scorpion).